Consider the following 491-residue polypeptide: UDP-N-acetylmuramate--L-alanine ligase (491 aa).

126–132 (GTHGKTT) is a binding site for ATP.

It belongs to the MurCDEF family.

It localises to the cytoplasm. It catalyses the reaction UDP-N-acetyl-alpha-D-muramate + L-alanine + ATP = UDP-N-acetyl-alpha-D-muramoyl-L-alanine + ADP + phosphate + H(+). The protein operates within cell wall biogenesis; peptidoglycan biosynthesis. Cell wall formation. In Escherichia coli O1:K1 / APEC, this protein is UDP-N-acetylmuramate--L-alanine ligase.